Here is a 163-residue protein sequence, read N- to C-terminus: Xanthine-guanine phosphoribosyltransferase (163 aa).

5-phospho-alpha-D-ribose 1-diphosphate is bound by residues 43–44 (RG) and 95–103 (DDLADTGGT). Asp-96 provides a ligand contact to Mg(2+). Guanine-binding residues include Asp-99 and Ile-142. Xanthine is bound by residues Asp-99 and Ile-142. GMP is bound by residues 99 to 103 (DTGGT) and 141 to 142 (WI).

It belongs to the purine/pyrimidine phosphoribosyltransferase family. XGPT subfamily. Homotetramer. Requires Mg(2+) as cofactor.

Its subcellular location is the cell inner membrane. The enzyme catalyses GMP + diphosphate = guanine + 5-phospho-alpha-D-ribose 1-diphosphate. It carries out the reaction XMP + diphosphate = xanthine + 5-phospho-alpha-D-ribose 1-diphosphate. The catalysed reaction is IMP + diphosphate = hypoxanthine + 5-phospho-alpha-D-ribose 1-diphosphate. Its pathway is purine metabolism; GMP biosynthesis via salvage pathway; GMP from guanine: step 1/1. It functions in the pathway purine metabolism; XMP biosynthesis via salvage pathway; XMP from xanthine: step 1/1. Purine salvage pathway enzyme that catalyzes the transfer of the ribosyl-5-phosphate group from 5-phospho-alpha-D-ribose 1-diphosphate (PRPP) to the N9 position of the 6-oxopurines guanine and xanthine to form the corresponding ribonucleotides GMP (guanosine 5'-monophosphate) and XMP (xanthosine 5'-monophosphate), with the release of PPi. To a lesser extent, also acts on hypoxanthine. The chain is Xanthine-guanine phosphoribosyltransferase from Nitratidesulfovibrio vulgaris (strain ATCC 29579 / DSM 644 / CCUG 34227 / NCIMB 8303 / VKM B-1760 / Hildenborough) (Desulfovibrio vulgaris).